We begin with the raw amino-acid sequence, 207 residues long: Uridine kinase (207 aa).

13–20 (GASGSGKT) contacts ATP.

Belongs to the uridine kinase family.

It localises to the cytoplasm. It catalyses the reaction uridine + ATP = UMP + ADP + H(+). The enzyme catalyses cytidine + ATP = CMP + ADP + H(+). It participates in pyrimidine metabolism; CTP biosynthesis via salvage pathway; CTP from cytidine: step 1/3. Its pathway is pyrimidine metabolism; UMP biosynthesis via salvage pathway; UMP from uridine: step 1/1. This is Uridine kinase from Ureaplasma urealyticum serovar 10 (strain ATCC 33699 / Western).